The primary structure comprises 436 residues: Trigger factor (436 aa).

The PPIase FKBP-type domain occupies 161 to 246 (DDQLNIDFVG…VNSVAEPKLP (86 aa)).

The protein belongs to the FKBP-type PPIase family. Tig subfamily.

Its subcellular location is the cytoplasm. It catalyses the reaction [protein]-peptidylproline (omega=180) = [protein]-peptidylproline (omega=0). Involved in protein export. Acts as a chaperone by maintaining the newly synthesized protein in an open conformation. Functions as a peptidyl-prolyl cis-trans isomerase. This Pseudomonas paraeruginosa (strain DSM 24068 / PA7) (Pseudomonas aeruginosa (strain PA7)) protein is Trigger factor.